The chain runs to 164 residues: Cyclic pyranopterin monophosphate synthase (164 aa).

Substrate-binding positions include 75-77 (MCH) and 116-117 (ME). Residue Asp-131 is part of the active site.

It belongs to the MoaC family. In terms of assembly, homohexamer; trimer of dimers.

It catalyses the reaction (8S)-3',8-cyclo-7,8-dihydroguanosine 5'-triphosphate = cyclic pyranopterin phosphate + diphosphate. Its pathway is cofactor biosynthesis; molybdopterin biosynthesis. Its function is as follows. Catalyzes the conversion of (8S)-3',8-cyclo-7,8-dihydroguanosine 5'-triphosphate to cyclic pyranopterin monophosphate (cPMP). This chain is Cyclic pyranopterin monophosphate synthase, found in Staphylococcus aureus (strain MRSA252).